Reading from the N-terminus, the 100-residue chain is Large ribosomal subunit protein uL23 (100 aa).

The protein belongs to the universal ribosomal protein uL23 family. In terms of assembly, part of the 50S ribosomal subunit. Contacts protein L29, and trigger factor when it is bound to the ribosome.

In terms of biological role, one of the early assembly proteins it binds 23S rRNA. One of the proteins that surrounds the polypeptide exit tunnel on the outside of the ribosome. Forms the main docking site for trigger factor binding to the ribosome. This Idiomarina loihiensis (strain ATCC BAA-735 / DSM 15497 / L2-TR) protein is Large ribosomal subunit protein uL23.